A 542-amino-acid chain; its full sequence is CTP synthase (542 aa).

The amidoligase domain stretch occupies residues 1 to 265 (MARYVFITGG…DSEILSAFGI (265 aa)). Ser-13 provides a ligand contact to CTP. Position 13 (Ser-13) interacts with UTP. 14 to 19 (SLGKGI) is a binding site for ATP. Tyr-54 is a binding site for L-glutamine. Asp-71 provides a ligand contact to ATP. Mg(2+) contacts are provided by Asp-71 and Glu-139. Residues 146-148 (DIE), 186-191 (KTKPTQ), and Lys-222 contribute to the CTP site. UTP-binding positions include 186-191 (KTKPTQ) and Lys-222. The Glutamine amidotransferase type-1 domain maps to 291-541 (TIAIVGKYTG…IAATVEQSRL (251 aa)). Ala-353 provides a ligand contact to L-glutamine. The active-site Nucleophile; for glutamine hydrolysis is Cys-380. L-glutamine-binding positions include 381 to 384 (FGMQ), Glu-404, and Arg-469. Catalysis depends on residues His-514 and Glu-516.

This sequence belongs to the CTP synthase family. Homotetramer.

It carries out the reaction UTP + L-glutamine + ATP + H2O = CTP + L-glutamate + ADP + phosphate + 2 H(+). It catalyses the reaction L-glutamine + H2O = L-glutamate + NH4(+). The catalysed reaction is UTP + NH4(+) + ATP = CTP + ADP + phosphate + 2 H(+). The protein operates within pyrimidine metabolism; CTP biosynthesis via de novo pathway; CTP from UDP: step 2/2. Its activity is regulated as follows. Allosterically activated by GTP, when glutamine is the substrate; GTP has no effect on the reaction when ammonia is the substrate. The allosteric effector GTP functions by stabilizing the protein conformation that binds the tetrahedral intermediate(s) formed during glutamine hydrolysis. Inhibited by the product CTP, via allosteric rather than competitive inhibition. In terms of biological role, catalyzes the ATP-dependent amination of UTP to CTP with either L-glutamine or ammonia as the source of nitrogen. Regulates intracellular CTP levels through interactions with the four ribonucleotide triphosphates. In Bartonella bacilliformis (strain ATCC 35685 / KC583 / Herrer 020/F12,63), this protein is CTP synthase.